Reading from the N-terminus, the 530-residue chain is MTRDFKPGDLIFAKMKGYPHWPARVDEVPDGAVKPPTNKLPIFFFGTHETAFLGPKDIFPYSENKEKYGKPNKRKGFNEGLWEIDNNPKVKFSSQQAATKQSNASSDVEVEEKETSVSKEDTDHEEKASNEDVTKAVDITTPKAARRGRKRKAEKQVETEEAGVVTTATASVNLKVSPKRGRPAATEVKIPKPRGRPKMVKQPCPSESDIITEEDKSKKKGQEEKQPKKQPKKDEEGQKEEDKPRKEPDKKEGKKEVESKRKNLAKTGVTSTSDSEEEGDDQEGEKKRKGGRNFQTAHRRNMLKGQHEKEAADRKRKQEEQMETEQQNKDEGKKPEVKKVEKKRETSMDSRLQRIHAEIKNSLKIDNLDVNRCIEALDELASLQVTMQQAQKHTEMITTLKKIRRFKVSQVIMEKSTMLYNKFKNMFLVGEGDSVITQVLNKSLAEQRQHEEANKTKDQGKKGPNKKLEKEQTGSKTLNGGSDAQDGNQPQHNGESNEDSKDNHEASTKKKPSSEERETEISLKDSTLDN.

Positions 1–64 (MTRDFKPGDL…PKDIFPYSEN (64 aa)) constitute a PWWP domain. Lysine 75 participates in a covalent cross-link: Glycyl lysine isopeptide (Lys-Gly) (interchain with G-Cter in SUMO2). A disordered region spans residues 88 to 349 (PKVKFSSQQA…VEKKRETSMD (262 aa)). Over residues 92–104 (FSSQQAATKQSNA) the composition is skewed to polar residues. Serine 102, serine 105, and serine 106 each carry phosphoserine. Residues 113–135 (KETSVSKEDTDHEEKASNEDVTK) show a composition bias toward basic and acidic residues. Phosphothreonine occurs at positions 115 and 122. Serine 129 is subject to Phosphoserine. A Phosphothreonine modification is found at threonine 141. Basic residues predominate over residues 144 to 153 (AARRGRKRKA). Residues 146–156 (RRGRKRKAEKQ) carry the Nuclear localization signal motif. The residue at position 167 (threonine 167) is a Phosphothreonine. Phosphoserine is present on residues serine 177 and serine 206. Positions 213 to 261 (EEDKSKKKGQEEKQPKKQPKKDEEGQKEEDKPRKEPDKKEGKKEVESKR) are enriched in basic and acidic residues. Serine 271 carries the phosphoserine modification. Threonine 272 bears the Phosphothreonine mark. 2 positions are modified to phosphoserine: serine 273 and serine 275. A compositionally biased stretch (acidic residues) spans 274–283 (DSEEEGDDQE). The segment covering 287–302 (KRKGGRNFQTAHRRNM) has biased composition (basic residues). A compositionally biased stretch (basic and acidic residues) spans 305-349 (GQHEKEAADRKRKQEEQMETEQQNKDEGKKPEVKKVEKKRETSMD). Coiled-coil stretches lie at residues 306–334 (QHEK…EGKK) and 371–395 (NRCI…KHTE). The integrase-binding domain (IBD) stretch occupies residues 340 to 417 (VEKKRETSMD…VSQVIMEKST (78 aa)). Residue serine 434 is modified to Phosphoserine. The residue at position 437 (threonine 437) is a Phosphothreonine. Serine 443 is modified (phosphoserine). A compositionally biased stretch (basic and acidic residues) spans 446–473 (EQRQHEEANKTKDQGKKGPNKKLEKEQT). Residues 446 to 530 (EQRQHEEANK…ISLKDSTLDN (85 aa)) form a disordered region. The span at 474–494 (GSKTLNGGSDAQDGNQPQHNG) shows a compositional bias: polar residues. The span at 498–530 (EDSKDNHEASTKKKPSSEERETEISLKDSTLDN) shows a compositional bias: basic and acidic residues. A Phosphoserine modification is found at serine 514. Citrulline is present on arginine 517. At serine 522 the chain carries Phosphoserine. A Phosphothreonine modification is found at threonine 527.

It belongs to the HDGF family. As to quaternary structure, monomer. Interacts with IFRD1/PC4. Isoform 2 interacts with SFRS1. Isoform 1 interacts (via IBD domain) with POGZ (via IBM motif) and CDCA7L (via IBM motifs). Interacts (via IBD domain) with KMT2A (via IBM motifs) with a moderate affinity whereas interacts with the KMT2A-MEN1 complex with a greater affinity; MEN1 enhances interaction of KMT2A with PSIP1. Interacts with fusion protein KMT2A-MLLT3. Interacts (via IBD domain) with IWS1 (via IBM motif), MED1 (via IBM motif) and DBF4 (via IBM motifs). In terms of assembly, (Microbial infection) Interacts (via IBD domain) with human HIV-1 integrase protein (HIV-1 IN), determining its nuclear localization, its tight association with chromatin and its protection from the proteasome. (Microbial infection) Interacts with HIV-2 IN. Post-translationally, citrullinated by PADI4. Widely expressed. Expressed at high level in the thymus. Expressed in fetal and adult brain. Expressed in neurons, but not astrocytes. Markedly elevated in fetal as compared to adult brain. In the adult brain, expressed in the subventricular zone (SVZ), in hippocampus, and undetectable elsewhere. In the fetal brain, expressed in the germinal neuroepithelium and cortical plate regions.

The protein localises to the nucleus. Its function is as follows. Transcriptional coactivator involved in neuroepithelial stem cell differentiation and neurogenesis. Involved in particular in lens epithelial cell gene regulation and stress responses. May play an important role in lens epithelial to fiber cell terminal differentiation. May play a protective role during stress-induced apoptosis. Isoform 2 is a more general and stronger transcriptional coactivator. Isoform 2 may also act as an adapter to coordinate pre-mRNA splicing. Cellular cofactor for lentiviral integration. This is PC4 and SFRS1-interacting protein (PSIP1) from Homo sapiens (Human).